The chain runs to 286 residues: MMRILLFLATNMAVLVVFNIILSLTGIQAQDATGLLLMAALFGFSGSLISLFLSKTMALRAVGAEVIKQPRNDMERWLVNTVRSQAERANLPMPDVAIYHSEDVNAFATGPSKNNSLVAVSTGLLRAMTQDEAEAVLAHEVAHIKNGDMVTMTLLQGVLNTFVIFVSRMIAKVVSSNRDGESSTGIYFLVSMVLEILFGFLASMIAMWFSRYREFRADAGSAKLVGKHKMIAALQRLQRLHEPQELEGQLAAFAINGKRGGLAALFMSHPPLEKRIAALQQLDSFK.

2 helical membrane passes run 4–24 (ILLFLATNMAVLVVFNIILSL) and 33–53 (TGLLLMAALFGFSGSLISLFL). Histidine 139 is a binding site for Zn(2+). Residue glutamate 140 is part of the active site. Histidine 143 provides a ligand contact to Zn(2+). Transmembrane regions (helical) follow at residues 147–167 (GDMVTMTLLQGVLNTFVIFVS) and 186–206 (IYFLVSMVLEILFGFLASMIA). Residue glutamate 214 participates in Zn(2+) binding.

The protein belongs to the peptidase M48B family. Zn(2+) is required as a cofactor.

The protein resides in the cell inner membrane. In Pasteurella multocida (strain Pm70), this protein is Protease HtpX.